A 203-amino-acid polypeptide reads, in one-letter code: Ras-related protein Rab-30 (203 aa).

GTP contacts are provided by V20, G21, K22, T23, C24, and T41. T23 provides a ligand contact to Mg(2+). Residues 36–44 are switch-I; it reads PGQGATIGV. 2 residues coordinate Mg(2+): T41 and D64. GTP-binding residues include G67, N122, K123, D125, A153, and K154. Residues 67–83 form a switch-II region; that stretch reads GQERFRSITQSYYRSAN. 2 S-geranylgeranyl cysteine lipidation sites follow: C199 and C200. C200 carries the post-translational modification Cysteine methyl ester. The propeptide at 201–203 is removed in mature form; that stretch reads NFN.

The protein belongs to the small GTPase superfamily. Rab family. Mg(2+) is required as a cofactor.

The protein resides in the membrane. It is found in the golgi apparatus. It localises to the trans-Golgi network membrane. The protein localises to the cis-Golgi network membrane. Its subcellular location is the golgi apparatus membrane. The protein resides in the cytoplasm. It is found in the cytoplasmic vesicle. It localises to the autophagosome membrane. The protein localises to the autolysosome membrane. It carries out the reaction GTP + H2O = GDP + phosphate + H(+). Regulated by guanine nucleotide exchange factors (GEFs) which promote the exchange of bound GDP for free GTP. Regulated by GTPase activating proteins (GAPs) which increase the GTP hydrolysis activity. Inhibited by GDP dissociation inhibitors (GDIs). In terms of biological role, the small GTPases Rab are key regulators of intracellular membrane trafficking, from the formation of transport vesicles to their fusion with membranes. Rabs cycle between an inactive GDP-bound form and an active GTP-bound form that is able to recruit to membranes different sets of downstream effectors directly responsible for vesicle formation, movement, tethering and fusion. RAB30 is required for maintaining the structural integrity of the Golgi apparatus, possibly by mediating interactions with cytoplasmic scaffolding proteins. Facilitates lipid homeostasis during fasting by regulating hepatic protein and lipid trafficking in a PPAR-alpha-dependent manner. Promotes autophagosome biogenesis during bacterial infection such as group A Streptococcus infection. This chain is Ras-related protein Rab-30 (RAB30), found in Bos taurus (Bovine).